The sequence spans 134 residues: UPF0412 protein YaaI (134 aa).

A signal peptide spans 1-23; it reads MKSVFTLSASLAISLLLCCTAQA.

Belongs to the UPF0412 family.

In Escherichia coli (strain SMS-3-5 / SECEC), this protein is UPF0412 protein YaaI.